We begin with the raw amino-acid sequence, 388 residues long: L-lactate dehydrogenase (388 aa).

The region spanning 1–380 (MIISAASDYR…SADALSRVTR (380 aa)) is the FMN hydroxy acid dehydrogenase domain. Y24 lines the substrate pocket. Residues S106 and Q127 each coordinate FMN. Y129 is a substrate binding site. T155 serves as a coordination point for FMN. R164 is a binding site for substrate. K251 contributes to the FMN binding site. Catalysis depends on H275, which acts as the Proton acceptor. Residue R278 participates in substrate binding. An FMN-binding site is contributed by 306-330 (DSGIRSGLDVVRMLALGADAVLLGR).

This sequence belongs to the FMN-dependent alpha-hydroxy acid dehydrogenase family. FMN serves as cofactor.

Its subcellular location is the cell inner membrane. It catalyses the reaction (S)-lactate + A = pyruvate + AH2. Its function is as follows. Catalyzes the conversion of L-lactate to pyruvate. Is coupled to the respiratory chain. This Xanthomonas oryzae pv. oryzae (strain MAFF 311018) protein is L-lactate dehydrogenase.